Reading from the N-terminus, the 436-residue chain is DNA primase DnaG (436 aa).

Positions Asp-169 to Tyr-243 constitute a Toprim domain. Mg(2+)-binding residues include Glu-175, Asp-217, and Asp-219.

It belongs to the archaeal DnaG primase family. Forms a ternary complex with MCM helicase and DNA. Mg(2+) is required as a cofactor.

It carries out the reaction ssDNA + n NTP = ssDNA/pppN(pN)n-1 hybrid + (n-1) diphosphate.. Its function is as follows. RNA polymerase that catalyzes the synthesis of short RNA molecules used as primers for DNA polymerase during DNA replication. The protein is DNA primase DnaG of Methanococcus maripaludis (strain DSM 14266 / JCM 13030 / NBRC 101832 / S2 / LL).